We begin with the raw amino-acid sequence, 261 residues long: Ubiquinone biosynthesis O-methyltransferase (261 aa).

Residues 1–22 (MTMQVDPSANSSAASSAAPGTT) form a disordered region. A compositionally biased stretch (low complexity) spans 8 to 18 (SANSSAASSAA). S-adenosyl-L-methionine-binding residues include Arg-55, Gly-86, Asp-107, and Met-149.

Belongs to the methyltransferase superfamily. UbiG/COQ3 family.

The enzyme catalyses a 3-demethylubiquinol + S-adenosyl-L-methionine = a ubiquinol + S-adenosyl-L-homocysteine + H(+). It carries out the reaction a 3-(all-trans-polyprenyl)benzene-1,2-diol + S-adenosyl-L-methionine = a 2-methoxy-6-(all-trans-polyprenyl)phenol + S-adenosyl-L-homocysteine + H(+). Its pathway is cofactor biosynthesis; ubiquinone biosynthesis. O-methyltransferase that catalyzes the 2 O-methylation steps in the ubiquinone biosynthetic pathway. The chain is Ubiquinone biosynthesis O-methyltransferase from Nitrobacter winogradskyi (strain ATCC 25391 / DSM 10237 / CIP 104748 / NCIMB 11846 / Nb-255).